Here is a 397-residue protein sequence, read N- to C-terminus: Dual-specificity RNA methyltransferase RlmN (397 aa).

Glutamate 116 serves as the catalytic Proton acceptor. The Radical SAM core domain maps to 122-366 (EDDRGTLCIS…SPIRKTRGDD (245 aa)). A disulfide bridge connects residues cysteine 129 and cysteine 371. [4Fe-4S] cluster is bound by residues cysteine 136, cysteine 140, and cysteine 143. S-adenosyl-L-methionine contacts are provided by residues 195–196 (GE), serine 227, 249–251 (SFH), and asparagine 328. The S-methylcysteine intermediate role is filled by cysteine 371.

It belongs to the radical SAM superfamily. RlmN family. The cofactor is [4Fe-4S] cluster.

It localises to the cytoplasm. The enzyme catalyses adenosine(2503) in 23S rRNA + 2 reduced [2Fe-2S]-[ferredoxin] + 2 S-adenosyl-L-methionine = 2-methyladenosine(2503) in 23S rRNA + 5'-deoxyadenosine + L-methionine + 2 oxidized [2Fe-2S]-[ferredoxin] + S-adenosyl-L-homocysteine. It catalyses the reaction adenosine(37) in tRNA + 2 reduced [2Fe-2S]-[ferredoxin] + 2 S-adenosyl-L-methionine = 2-methyladenosine(37) in tRNA + 5'-deoxyadenosine + L-methionine + 2 oxidized [2Fe-2S]-[ferredoxin] + S-adenosyl-L-homocysteine. Functionally, specifically methylates position 2 of adenine 2503 in 23S rRNA and position 2 of adenine 37 in tRNAs. m2A2503 modification seems to play a crucial role in the proofreading step occurring at the peptidyl transferase center and thus would serve to optimize ribosomal fidelity. This chain is Dual-specificity RNA methyltransferase RlmN, found in Ruegeria sp. (strain TM1040) (Silicibacter sp.).